We begin with the raw amino-acid sequence, 223 residues long: Probable glutathione S-transferase (223 aa).

Residues 2 to 81 form the GST N-terminal domain; that stretch reads AEVKLLGFWY…YIDETFEGPS (80 aa). Glutathione is bound by residues Ser12, Lys39, Val53, and 65–66; that span reads ES. The GST C-terminal domain maps to 86 to 212; sequence DPYDRALARF…ELLAFFRARF (127 aa).

Belongs to the GST superfamily. HSP26 family. Root tip-specific expression.

It catalyses the reaction RX + glutathione = an S-substituted glutathione + a halide anion + H(+). This Nicotiana tabacum (Common tobacco) protein is Probable glutathione S-transferase.